Reading from the N-terminus, the 303-residue chain is HTH-type transcriptional regulator YjiE (303 aa).

Residues Ile-11 to Ser-68 form the HTH lysR-type domain. The segment at residues Phe-28–Arg-47 is a DNA-binding region (H-T-H motif).

This sequence belongs to the LysR transcriptional regulatory family. As to quaternary structure, forms dimers, tetramers and possibly dodecameric complexes; oligomerization may be governed by cellular concentrations. DNA-binding seems to decrease oligomerization.

In terms of biological role, protects cells from HOCl (hypochlorite) stress but not peroxide or diamide stress. Decreases the intracellular load of reactive oxygen species by up-regulating genes involved in methionine and cysteine biosynthesis and down-regulating Fur-regulated genes involved in iron acquisition. Has also been suggested to down-regulate expression of the flagellar regulon, decreasing motility, but this activity was not confirmed in a second study. In Escherichia coli (strain K12), this protein is HTH-type transcriptional regulator YjiE (yjiE).